Here is a 420-residue protein sequence, read N- to C-terminus: Dynein axonemal assembly factor 4 (420 aa).

In terms of domain architecture, CS spans 3–87 (LQVSDYSWQQ…KEAAMWETLS (85 aa)). The tract at residues 7 to 103 (DYSWQQTKTA…EMMQRIREKS (97 aa)) is mediates interaction with ESR1 and STUB1. TPR repeat units lie at residues 290-323 (PEWL…NNKM), 324-357 (PLLY…LMPP), and 366-399 (MKAH…DPSN).

As to quaternary structure, interacts with ZMYND10. Interacts with STUB1. Interacts with ESR1 and ESR2. Interacts with DNAAF2. Interacts with CCT3, CCT4, CCT5 and CCT8. Interacts with DNAAF6/PIH1D3.

The protein localises to the nucleus. It localises to the cytoplasm. Its subcellular location is the cell projection. It is found in the neuron projection. The protein resides in the dynein axonemal particle. In terms of biological role, involved in neuronal migration during development of the cerebral neocortex. May regulate the stability and proteasomal degradation of the estrogen receptors that play an important role in neuronal differentiation, survival and plasticity. Axonemal dynein assembly factor required for ciliary motility. The polypeptide is Dynein axonemal assembly factor 4 (Pan troglodytes (Chimpanzee)).